A 485-amino-acid chain; its full sequence is Glutamyl-tRNA(Gln) amidotransferase subunit A (485 aa).

Active-site charge relay system residues include lysine 79 and serine 154. The Acyl-ester intermediate role is filled by serine 178.

The protein belongs to the amidase family. GatA subfamily. Heterotrimer of A, B and C subunits.

The enzyme catalyses L-glutamyl-tRNA(Gln) + L-glutamine + ATP + H2O = L-glutaminyl-tRNA(Gln) + L-glutamate + ADP + phosphate + H(+). Its function is as follows. Allows the formation of correctly charged Gln-tRNA(Gln) through the transamidation of misacylated Glu-tRNA(Gln) in organisms which lack glutaminyl-tRNA synthetase. The reaction takes place in the presence of glutamine and ATP through an activated gamma-phospho-Glu-tRNA(Gln). The sequence is that of Glutamyl-tRNA(Gln) amidotransferase subunit A from Bacillus licheniformis (strain ATCC 14580 / DSM 13 / JCM 2505 / CCUG 7422 / NBRC 12200 / NCIMB 9375 / NCTC 10341 / NRRL NRS-1264 / Gibson 46).